The sequence spans 503 residues: WD repeat-containing protein 55 homolog (503 aa).

Residues 1-131 (MHTHNNFKTP…DSAAFDLDDL (131 aa)) are disordered. 2 stretches are compositionally biased toward acidic residues: residues 12–23 (DADELDDLDDDM) and 37–56 (VGED…DMEA). Residues 59–76 (PNQNADENESISSDSSFD) are compositionally biased toward polar residues. A compositionally biased stretch (acidic residues) spans 78–96 (NAEDSSDSDDSMLEEDEAE). WD repeat units follow at residues 157–196 (KLED…NKLL), 201–242 (VHSK…KLYE), 244–282 (AHDD…PIFE), 285–324 (EVED…LYVQ), 327–366 (PYEE…YHCD), and 411–450 (QHNM…DFGD). Residues 483 to 503 (TKEDEDNADNNDAAAGPSNSA) are disordered.

The protein belongs to the WD repeat WDR55 family.

This is WD repeat-containing protein 55 homolog from Drosophila pseudoobscura pseudoobscura (Fruit fly).